The chain runs to 177 residues: Peptide methionine sulfoxide reductase MsrA 2 (177 aa).

Cys12 is a catalytic residue.

This sequence belongs to the MsrA Met sulfoxide reductase family.

It carries out the reaction L-methionyl-[protein] + [thioredoxin]-disulfide + H2O = L-methionyl-(S)-S-oxide-[protein] + [thioredoxin]-dithiol. The enzyme catalyses [thioredoxin]-disulfide + L-methionine + H2O = L-methionine (S)-S-oxide + [thioredoxin]-dithiol. Has an important function as a repair enzyme for proteins that have been inactivated by oxidation. Catalyzes the reversible oxidation-reduction of methionine sulfoxide in proteins to methionine. In Staphylococcus aureus (strain NCTC 8325 / PS 47), this protein is Peptide methionine sulfoxide reductase MsrA 2 (msrA2).